A 444-amino-acid polypeptide reads, in one-letter code: Exodeoxyribonuclease 7 large subunit (444 aa).

It belongs to the XseA family. In terms of assembly, heterooligomer composed of large and small subunits.

It localises to the cytoplasm. The enzyme catalyses Exonucleolytic cleavage in either 5'- to 3'- or 3'- to 5'-direction to yield nucleoside 5'-phosphates.. Its function is as follows. Bidirectionally degrades single-stranded DNA into large acid-insoluble oligonucleotides, which are then degraded further into small acid-soluble oligonucleotides. In Aliivibrio salmonicida (strain LFI1238) (Vibrio salmonicida (strain LFI1238)), this protein is Exodeoxyribonuclease 7 large subunit.